A 255-amino-acid chain; its full sequence is Small ribosomal subunit protein uS2 (255 aa).

The segment at 233-255 (DFVAEEAASEESLEELAEIVEGK) is disordered.

It belongs to the universal ribosomal protein uS2 family.

The chain is Small ribosomal subunit protein uS2 from Lactococcus lactis subsp. cremoris (strain SK11).